Reading from the N-terminus, the 2378-residue chain is Serine/threonine-protein kinase ATM (2378 aa).

One can recognise an FAT domain in the interval 1415-1937 (LSARKRNTMM…LHTILMYDDE (523 aa)). Positions 2044–2366 (WKDVFTIADG…LLREATSADN (323 aa)) constitute a PI3K/PI4K catalytic domain. Residues 2050–2056 (IADGIST) are G-loop. The tract at residues 2218-2226 (GLGDRHASN) is catalytic loop. The tract at residues 2238–2263 (HIDLGMILEYSKRTLPVPEQVPFRIT) is activation loop. Residues 2346–2378 (TAQSSNLQIRRLLREATSADNLSRMFCGWMPFL) form the FATC domain.

The protein belongs to the PI3/PI4-kinase family. ATM subfamily.

Its subcellular location is the nucleus. The enzyme catalyses L-seryl-[protein] + ATP = O-phospho-L-seryl-[protein] + ADP + H(+). It carries out the reaction L-threonyl-[protein] + ATP = O-phospho-L-threonyl-[protein] + ADP + H(+). Serine/threonine protein kinase which activates checkpoint signaling in the presence of DNA double strand breaks (DSBs) and other forms of DNA damage induced by ionizing radiation and other genotoxic stresses such as UV. Plays a role in maintaining genome stability. The chain is Serine/threonine-protein kinase ATM (atm-1) from Caenorhabditis elegans.